We begin with the raw amino-acid sequence, 101 residues long: Small ribosomal subunit protein uS14 (101 aa).

It belongs to the universal ribosomal protein uS14 family. Part of the 30S ribosomal subunit. Contacts proteins S3 and S10.

Functionally, binds 16S rRNA, required for the assembly of 30S particles and may also be responsible for determining the conformation of the 16S rRNA at the A site. This is Small ribosomal subunit protein uS14 from Beijerinckia indica subsp. indica (strain ATCC 9039 / DSM 1715 / NCIMB 8712).